Consider the following 150-residue polypeptide: Small ribosomal subunit protein uS13 (150 aa).

The interval 131 to 150 (QRTKSTFRRGPTVGVSRRKK) is disordered.

It belongs to the universal ribosomal protein uS13 family. In terms of assembly, part of the 30S ribosomal subunit. Forms a loose heterodimer with protein S19. Forms two bridges to the 50S subunit in the 70S ribosome.

In terms of biological role, located at the top of the head of the 30S subunit, it contacts several helices of the 16S rRNA. In the 70S ribosome it contacts the 23S rRNA (bridge B1a) and protein L5 of the 50S subunit (bridge B1b), connecting the 2 subunits; these bridges are implicated in subunit movement. This Methanocaldococcus jannaschii (strain ATCC 43067 / DSM 2661 / JAL-1 / JCM 10045 / NBRC 100440) (Methanococcus jannaschii) protein is Small ribosomal subunit protein uS13.